Consider the following 58-residue polypeptide: Small integral membrane protein 11 (58 aa).

A helical transmembrane segment spans residues 10 to 32 (PLLLYILAAKTLILCLTFAGVKM). Residues 29–58 (GVKMYQRKRLEAKQQKLEAERKKQSEKKDN) are a coiled coil.

Expressed in heart, spleen, liver, stomach, muscle, lung, testis, skin, PBL and bone marrow.

It is found in the membrane. This Homo sapiens (Human) protein is Small integral membrane protein 11.